Reading from the N-terminus, the 262-residue chain is Octopine permease ATP-binding protein P (262 aa).

In terms of domain architecture, ABC transporter spans 9-254; sequence VQLKDIRKNF…PRTDRFRQFL (246 aa). 41 to 48 is a binding site for ATP; it reads GSSGSGKS.

Belongs to the ABC transporter superfamily.

It is found in the cell inner membrane. Functionally, component of the octopine active transport system probably consisting of four subunits: Q, M, P and T. The protein is Octopine permease ATP-binding protein P (occP) of Rhizobium radiobacter (Agrobacterium tumefaciens).